The primary structure comprises 1275 residues: MENFILYEEIGRGSKTVVYKGRRKGTINFVAILCTDKCKRPEITNWVRLTREIKHKNIVTFHEWYETSNHLWLVVELCTGGSLKTVIAQDENLPEDVVREFGIDLISGLHHLHKLGILFCDISPRKILLEGPGTLKFSNFCLAKVEGENLEEFFALVAAEEGGGDNGENVLKKSMKSRVKGSPVYTAPEVVRGADFSISSDLWSLGCLLYEMFSGKPPFFSESISELTEKILCEDPLPPIPKDSSRPKASSDFINLLDGLLQRDPQKRLTWTRLLQHSFWKKAFAGADQESSVEDLSLSRNTMECSGPQDSKELLQNSQSRQAKGHKSGQPLGHSFRLENPTEFRPKSTLEGQLNESMFLLSSRPTPRTSTAVEVSPGEDMTHCSPQKTSPLTKITSGHLSQQDLESQMRELIYTDSDLVVTPIIDNPKIMKQPPVKFDAKILHLPTYSVDKLLFLKDQDWNDFLQQVCSQIDSTEKSMGASRAKLNLLCYLCVVAGHQEVATRLLHSPLFQLLIQHLRIAPNWDIRAKVAHVIGLLASHTAELQENTPVVEAIVLLTELIRENFRNSKLKQCLLPTLGELIYLVATQEEKKKNPRECWAVPLAAYTVLMRCLREGEERVVNHMAAKIIENVCTTFSAQSQGFITGEIGPILWYLFRHSTADSLRITAVSALCRITRHSPTAFQNVIEKVGLNSVINSLASAICKVQQYMLTLFAAMLSCGIHLQRLIQEKGFVSTIIRLLDSPSTCIRAKAFLVLLYILIYNREMLLLSCQARLVMYIERDSRKTTPGKEQQSGNEYLSKCLDLLICHIVQELPRILGDILNSLANVSGRKHPSTVQVKQLKLCLPLMPVVLHLVTSQVFRPQVVTEEFLFSYGTILSHIKSVDSGETNIDGAIGLTASEEFIKITLSAFEAIIQYPILLKDYRSTVVDYILPPLVSLVQSQNVEWRLFSLRLLSETTSLLVNQEFGDGKEKASVDSDSNLLALIRDVLLPQYEHILLEPDPVPAYALKLLVAMTEHNPTFTRLVEESKLIPLIFEVTLEHQESILGNTMQSVIALLSNLVACKDSNMELLYEQGLVSHICNLLTETATLCLDVDNKNNNEMAAPLLFSLLDILHSMLTYTSGIVRLALQAQKSGSGEDPQAAEDLLLLNRPLTDLISLLIPLLPNEDPEIFDVSSKCLSILVQLYGGENPDSLSPENVEIFAHLLTSKEDPKEQKLLLRILRRMITSNEKHLESLKNAGSLLRALERLAPGSGSFADSAVAPLALEILQAVGH.

The 277-residue stretch at 4 to 280 (FILYEEIGRG…WTRLLQHSFW (277 aa)) folds into the Protein kinase domain. Disordered regions lie at residues 299–350 (SRNT…KSTL) and 364–392 (RPTP…TSPL). A compositionally biased stretch (basic and acidic residues) spans 336–348 (FRLENPTEFRPKS). Residues 364-373 (RPTPRTSTAV) are compositionally biased toward polar residues. HEAT repeat units lie at residues 842–880 (LKLC…ILSH), 926–964 (STVV…LLVN), 1025–1063 (LVEE…NLVA), 1151–1189 (NRPL…LYGG), and 1213–1253 (PKEQ…LAPG).

The protein belongs to the protein kinase superfamily. Ser/Thr protein kinase family. APG1/unc-51/ULK1 subfamily. In terms of tissue distribution, expressed in the brain, mainly in postmitotic neurons, including GABAergic neurons, but not in astrocytes (at protein level).

The catalysed reaction is L-seryl-[protein] + ATP = O-phospho-L-seryl-[protein] + ADP + H(+). It catalyses the reaction L-threonyl-[protein] + ATP = O-phospho-L-threonyl-[protein] + ADP + H(+). Its function is as follows. May be involved in the remodeling of cytoskeletal components, such as alpha-tubulin, and in this way regulates neurite branching and elongation, as well as cell motility. The sequence is that of Serine/threonine-protein kinase ULK4 (ULK4) from Homo sapiens (Human).